The sequence spans 249 residues: General transcription factor IIF subunit 2 (249 aa).

A2 carries the N-acetylalanine modification. Residues K22, K33, and K137 each carry the N6-acetyllysine modification. At S142 the chain carries Phosphoserine. DNA-binding residues include G227 and H229. S248 is subject to Phosphoserine.

The protein belongs to the TFIIF beta subunit family. As to quaternary structure, heterodimer of an alpha and a beta subunit. Interacts with HTATSF1 and GPBP1. Interacts with URI1. Interacts with GTF2B (via N-terminus); this interaction is inhibited in presence of GTF2F1. Part of TBP-based Pol II pre-initiation complex (PIC), in which Pol II core assembles with general transcription factors and other specific initiation factors including GTF2E1, GTF2E2, GTF2F1, GTF2F2, TCEA1, ERCC2, ERCC3, GTF2H2, GTF2H3, GTF2H4, GTF2H5, GTF2A1, GTF2A2, GTF2B and TBP; this large multi-subunit PIC complex mediates DNA unwinding and targets Pol II core to the transcription start site where the first phosphodiester bond forms.

Its subcellular location is the nucleus. In terms of biological role, TFIIF is a general transcription initiation factor that binds to RNA polymerase II and helps to recruit it to the initiation complex in collaboration with TFIIB. This is General transcription factor IIF subunit 2 (GTF2F2) from Homo sapiens (Human).